The primary structure comprises 3092 residues: Inhibitory regulator protein IRA1 (3092 aa).

2 disordered regions span residues 375–430 (HLHH…MASL) and 450–487 (LGQA…NSAN). Residues 379–400 (SSSSSKTTNTNSPNSISKTSIK) are compositionally biased toward low complexity. The segment covering 401–430 (QSSVNASGNVSPSQFSTGNDASPTSPMASL) has biased composition (polar residues). The span at 455 to 487 (TSTSTTAATTKTDADTPSTMNTNNNNNNNNSAN) shows a compositional bias: low complexity. Phosphoserine is present on residues Ser-497 and Ser-915. 2 disordered regions span residues 946–988 (SGVP…VLSS) and 1003–1023 (TILK…ADDK). Positions 965 to 988 (QSPYSSPPQLQQSDLPSPLSVLSS) are enriched in low complexity. Phosphoserine is present on Ser-1342. A Ras-GAP domain is found at 1725 to 1930 (NASHILVTEL…DKIFNFLSEL (206 aa)). Ser-1753 and Ser-3004 each carry phosphoserine; by PKA.

It is found in the cytoplasm. In terms of biological role, inhibitory regulator of the Ras-cyclic AMP pathway in S.cerevisiae. Stimulates the GTPase activity of Ras proteins. In Saccharomyces cerevisiae (strain ATCC 204508 / S288c) (Baker's yeast), this protein is Inhibitory regulator protein IRA1 (IRA1).